A 366-amino-acid polypeptide reads, in one-letter code: Polyprenyl transferase AOL_s00215g276 (366 aa).

The segment at 1-22 (MESIIARPRTRSSAKEKTQTMS) is disordered. 7 helical membrane passes run 53-73 (LHTL…CLSA), 85-105 (FLSV…AFCT), 137-157 (IIAF…TLGF), 160-180 (ALVC…KRVV), 185-205 (LVLG…VAGN), 212-232 (AVPM…IYAT), and 253-273 (HMHQ…SFTA). N-linked (GlcNAc...) asparagine glycosylation is present at Asn277. The next 2 membrane-spanning stretches (helical) occupy residues 281-301 (LFWS…LLSL) and 312-332 (VFLM…IELW). A glycan (N-linked (GlcNAc...) asparagine) is linked at Asn352.

It belongs to the UbiA prenyltransferase family. Requires Mg(2+) as cofactor.

It is found in the membrane. It participates in secondary metabolite biosynthesis; terpenoid biosynthesis. Functionally, polyprenyl transferase; part of the gene cluster that mediates the biosynthesis of sesquiterpenyl epoxy-cyclohexenoids (SECs) such as anthrobotrisins and arthrosporols, metabolites that possess a novel hybrid carbon skeleton consisting of a polyketide-derived epoxycyclohexenol combined with a terpenoid-derived monocyclic sesquiterpenol substructure (PKS-PTS hybrid). The SEC pathway plays an important role for fungal soil colonization via decreasing fungal nematode-capturing ability. Within the pathway, the polyprenyl transferase catalyzes the farnesylation of toluquinol to yield farnesyl hydroquinone, the first hybrid precursor for biosynthesis of SECs, and farnesyl quinone (34) might be the key precursor for the epoxy ring formation. The pathway begins with the biosynthesis of 6-methylsalicylic acid (6-MSA), the first precursor of the polyketide-derived epoxycyclohexenol in arthrosporols, by the polyketide synthase (PKS) AOL_s00215g283 via condensation of 1 acetate and 3 malonate units. The 6-methylsalicylic acid decarboxylase AOL_s00215g281 then catalyzes the decarboxylation of 6-methylsalicylic acid to yield m-cresol. The cytochrome P450 monooxygenase AOL_s00215g282 further oxidizes m-cresol to yield toluquinol. With the assistance of the oxidoreductase AOL_s00215g277, the polyprenyl transferase AOL_s00215g276 catalyzes the farnesylation of toluquinol to produce farnesyl hydroquinone, the hybrid precursor for biosynthesis of SECs. Farnesyl hydroquinone undergoes epoxidation and then subsequent dehydrogenation to form farnesyl epoxy-quinone, the first and simplest SEC. The cytochrome P450 monooxygenase AOL_s00215g278 and the FAD-dependent monooxygenase AOL_s00215g279 might be involved in the oxygenation of the phenol moiety, most likely in the epoxy formation. The cytochrome P450 monooxygenases AOL_s00215g274 and AOL_s00215g280 are involved in specific regional ketone reductions at respectively C-4 and C-1 of farnesyl epoxy-quinone PubMed:33823587. The sequence is that of Polyprenyl transferase AOL_s00215g276 from Arthrobotrys oligospora (strain ATCC 24927 / CBS 115.81 / DSM 1491) (Nematode-trapping fungus).